The chain runs to 226 residues: MLIQIADLFTPAEAAQIRARLEAADWVDGKVTAGYQSAQVKHNRQLSEQHPLAQELGGLILQRLAANNLFMSAALPRKIFPPLFNRYEGGEAFGYHVDNALRPVPGTAERVRTDLSATLFFSEPDSYDGGELVVDDTYGPRTVKLPAGHMVLYPGTSLHKVTPVTRGARISAFFWLQSLVREDSQRSLLLEMDVAIQRLNQDTPGHASIVQLTGVYHNLLRRWTDV.

One can recognise a Fe2OG dioxygenase domain in the interval 78–178 (KIFPPLFNRY…RISAFFWLQS (101 aa)). Residues His-96, Asp-98, and His-159 each coordinate Fe cation. 2-oxoglutarate is bound at residue Arg-169.

Fe(2+) serves as cofactor. Requires L-ascorbate as cofactor.

This is PKHD-type hydroxylase BP3529 from Bordetella pertussis (strain Tohama I / ATCC BAA-589 / NCTC 13251).